We begin with the raw amino-acid sequence, 81 residues long: Large ribosomal subunit protein bL31B (81 aa).

The protein belongs to the bacterial ribosomal protein bL31 family. Type B subfamily. As to quaternary structure, part of the 50S ribosomal subunit.

The polypeptide is Large ribosomal subunit protein bL31B (Limosilactobacillus fermentum (strain NBRC 3956 / LMG 18251) (Lactobacillus fermentum)).